Consider the following 446-residue polypeptide: Plant intracellular Ras-group-related LRR protein 3 (446 aa).

Positions 65 to 100 form a coiled coil; the sequence is EACRAVVRLEETHDAYEALLQEAEGRLEAVYRSAME. A disordered region spans residues 101-121; sequence GKDLEEPDGRDESAAAAAGDD. LRR repeat units lie at residues 138–160, 161–184, 185–207, 208–230, 232–254, 255–277, 279–300, 301–324, 325–347, and 349–371; these read GKPV…AFGR, IQGL…IGGL, DHLE…IGLL, LNLR…ISKC, SLIE…GYEL, VNLR…ICEM, SLYL…IGKL, SSLE…SFGD, LLNL…NFGR, and DKLE…IVNK. The short motif at 372-384 is the GVYW element; it reads GVDAVKEYMLQRW.

It belongs to the SHOC2 family. In terms of tissue distribution, widely expressed.

Its function is as follows. Leucine-rich repeat protein that likely mediates protein interactions, possibly in the context of signal transduction. This Oryza sativa subsp. japonica (Rice) protein is Plant intracellular Ras-group-related LRR protein 3 (IRL3).